The primary structure comprises 203 residues: FMN-dependent NADH:quinone oxidoreductase 5 (203 aa).

Residues Ser9, 15 to 17, 95 to 98, and 139 to 142 each bind FMN; these read SAS, MYNF, and TSGG.

It belongs to the azoreductase type 1 family. In terms of assembly, homodimer. FMN is required as a cofactor.

The catalysed reaction is 2 a quinone + NADH + H(+) = 2 a 1,4-benzosemiquinone + NAD(+). It catalyses the reaction N,N-dimethyl-1,4-phenylenediamine + anthranilate + 2 NAD(+) = 2-(4-dimethylaminophenyl)diazenylbenzoate + 2 NADH + 2 H(+). In terms of biological role, quinone reductase that provides resistance to thiol-specific stress caused by electrophilic quinones. Its function is as follows. Also exhibits azoreductase activity. Catalyzes the reductive cleavage of the azo bond in aromatic azo compounds to the corresponding amines. This is FMN-dependent NADH:quinone oxidoreductase 5 from Pseudomonas fluorescens (strain ATCC BAA-477 / NRRL B-23932 / Pf-5).